The sequence spans 586 residues: BTB/POZ domain and ankyrin repeat-containing protein NPR1 (586 aa).

The region spanning 63 to 139 is the BTB domain; it reads SDADIVVEGI…VYTGKLKPSP (77 aa). Residues 142–156 form a C2HC NPR-type zinc finger; sequence VSTCVHNVCAHDACR. 4 residues coordinate Zn(2+): C145, C150, H152, and C155. ANK repeat units lie at residues 266–296, 298–325, and 329–358; these read KRIRRIHKALDSDDVELVKLLLTESNITLDE, NALHYAAAYCDPKVVTEVLALGLADVNL, and RGYTALHIAVMRKEPSIIVLLLTKGARASE. Positions 388 to 522 are salicylic acid-binding core (SBC); sequence EANKDRICID…LDKFIDDDLP (135 aa). R433 serves as a coordination point for salicylate. The disordered stretch occupies residues 561–586; the sequence is NLSGLSSSSSTTSPEKIGANQKVREP. The segment covering 562–573 has biased composition (low complexity); that stretch reads LSGLSSSSSTTS.

Belongs to the plant 'ANKYRIN-BTB/POZ' family. 'NPR1-like' subfamily. In terms of tissue distribution, highly expressed in leaves. Expressed at low levels in roots and stems.

It is found in the cytoplasm. The protein localises to the nucleus. The protein resides in the nuclear body. It functions in the pathway protein modification; protein ubiquitination. In terms of biological role, salicylic acid (SA)-binding substrate-specific adapter of an E3 ubiquitin-protein ligase complex (CUL3-RBX1-BTB) which mediates the ubiquitination and subsequent proteasomal degradation of target proteins. Transcription cofactor that represses gene expression in the absence of salicylic acid (SA), when attached to negative cis-elements (W-box) with WRKY transcription factors, but stimulates gene expression upon activation by SA, when sumoylated and attached to positive cis-elements (as-1) with TGA transcription factors, thus confering immunity through a series of gene regulations ending in a significant increase in antimicrobial and defense genes expression. Probable component of the salicylic acid (SA) defense signaling pathway and pathogen-induced systemic acquired resistance (SAR). May be involved in disease resistance against fungal pathogens. May be involved in tolerance to salt and osmotic stresses. The chain is BTB/POZ domain and ankyrin repeat-containing protein NPR1 from Malus hupehensis (Chinese crab apple).